A 997-amino-acid polypeptide reads, in one-letter code: Kinesin-like protein KIF19 (997 aa).

The region spanning 11–346 (QLMVALRVRP…LTYAGRAKNI (336 aa)) is the Kinesin motor domain. 104–111 (GPTGCGKT) contributes to the ATP binding site. Residues 361–388 (IAQYTSIIADLRGEIQRLKCKIDQQAGR) adopt a coiled-coil conformation. A compositionally biased stretch (basic and acidic residues) spans 477-494 (EERRKESYTKEDSEKDSD). Disordered stretches follow at residues 477 to 509 (EERR…EVAS), 665 to 704 (KITP…GTDS), 718 to 759 (QVKS…SSEN), and 784 to 997 (AAQR…LQHN). The stretch at 506-551 (EVASARENIAALVGEQKKLRKEKLALEQRCRELRARGRRLEETLPR) forms a coiled coil. Polar residues predominate over residues 683 to 697 (KTLSSEAQRPQNNTL). Over residues 750 to 759 (INSSPESSEN) the composition is skewed to low complexity. Polar residues-rich tracts occupy residues 835–851 (TLQH…STGE) and 950–959 (PNQNTGSGNP).

This sequence belongs to the TRAFAC class myosin-kinesin ATPase superfamily. Kinesin family. In terms of tissue distribution, strongly expressed in the oviduct and trachea. Expressed in testis, lung, ovary and brain.

The protein localises to the cytoplasm. Its subcellular location is the cytoskeleton. It is found in the cell projection. It localises to the cilium. Plus end-directed microtubule-dependent motor protein that regulates the length of motile cilia by mediating depolymerization of microtubules at ciliary tips. The chain is Kinesin-like protein KIF19 (Kif19) from Mus musculus (Mouse).